The primary structure comprises 141 residues: Hemoglobin subunit alpha (141 aa).

The 141-residue stretch at 1-141 (VLSPEDKNHV…VSTVLTSKYR (141 aa)) folds into the Globin domain. Serine 3 is modified (phosphoserine). Lysine 7 carries the post-translational modification N6-succinyllysine. The residue at position 16 (lysine 16) is an N6-acetyllysine; alternate. Lysine 16 is modified (N6-succinyllysine; alternate). Position 24 is a phosphotyrosine (tyrosine 24). Serine 35 bears the Phosphoserine mark. Lysine 40 bears the N6-succinyllysine mark. Serine 49 is modified (phosphoserine). Histidine 58 provides a ligand contact to O2. Heme b is bound at residue histidine 87. Serine 102 is modified (phosphoserine). Position 108 is a phosphothreonine (threonine 108). Phosphoserine is present on residues serine 124 and serine 131. Residues threonine 134 and threonine 137 each carry the phosphothreonine modification. Serine 138 carries the phosphoserine modification.

It belongs to the globin family. In terms of assembly, heterotetramer of two alpha chains and two beta chains. As to expression, red blood cells.

Its function is as follows. Involved in oxygen transport from the lung to the various peripheral tissues. Functionally, hemopressin acts as an antagonist peptide of the cannabinoid receptor CNR1. Hemopressin-binding efficiently blocks cannabinoid receptor CNR1 and subsequent signaling. The polypeptide is Hemoglobin subunit alpha (HBA) (Spalax ehrenbergi (Middle East blind mole rat)).